The chain runs to 373 residues: 3 beta-hydroxysteroid dehydrogenase/Delta 5--&gt;4-isomerase type 2 (373 aa).

The Proton acceptor role is filled by Y155. K159 lines the NAD(+) pocket. A helical membrane pass occupies residues 288–308 (LPLLYWLAFLLETVSFLLRPF).

It belongs to the 3-beta-HSD family. In terms of tissue distribution, adrenal glands, testes and ovaries.

The protein localises to the endoplasmic reticulum membrane. The protein resides in the mitochondrion membrane. The enzyme catalyses a 3beta-hydroxy-Delta(5)-steroid + NAD(+) = a 3-oxo-Delta(5)-steroid + NADH + H(+). The catalysed reaction is a 3-oxo-Delta(5)-steroid = a 3-oxo-Delta(4)-steroid. The protein operates within lipid metabolism; steroid biosynthesis. Functionally, 3-beta-HSD is a bifunctional enzyme, that catalyzes the oxidative conversion of Delta(5)-ene-3-beta-hydroxy steroid, and the oxidative conversion of ketosteroids. The 3-beta-HSD enzymatic system plays a crucial role in the biosynthesis of all classes of hormonal steroids. The protein is 3 beta-hydroxysteroid dehydrogenase/Delta 5--&gt;4-isomerase type 2 (Hsd3b) of Rattus norvegicus (Rat).